We begin with the raw amino-acid sequence, 280 residues long: CAG pathogenicity island protein 12 (280 aa).

The first 20 residues, Met1 to Ala20, serve as a signal peptide directing secretion. A lipid anchor (N-palmitoyl cysteine) is attached at Cys21. Cys21 is lipidated: S-diacylglycerol cysteine.

The protein localises to the cell membrane. The chain is CAG pathogenicity island protein 12 (cagT) from Helicobacter pylori (strain ATCC 700392 / 26695) (Campylobacter pylori).